A 61-amino-acid polypeptide reads, in one-letter code: Small ribosomal subunit protein uS14 (61 aa).

The Zn(2+) site is built by cysteine 24, cysteine 27, cysteine 40, and cysteine 43.

This sequence belongs to the universal ribosomal protein uS14 family. Zinc-binding uS14 subfamily. In terms of assembly, part of the 30S ribosomal subunit. Contacts proteins S3 and S10. Zn(2+) is required as a cofactor.

Functionally, binds 16S rRNA, required for the assembly of 30S particles and may also be responsible for determining the conformation of the 16S rRNA at the A site. The sequence is that of Small ribosomal subunit protein uS14 from Anaeromyxobacter dehalogenans (strain 2CP-1 / ATCC BAA-258).